We begin with the raw amino-acid sequence, 137 residues long: Large ribosomal subunit protein uL16 (137 aa).

The segment at 1 to 20 (MLQPKRTKFRKQQKMRNRGL) is disordered.

Belongs to the universal ribosomal protein uL16 family. In terms of assembly, part of the 50S ribosomal subunit.

Its function is as follows. Binds 23S rRNA and is also seen to make contacts with the A and possibly P site tRNAs. The sequence is that of Large ribosomal subunit protein uL16 from Francisella philomiragia subsp. philomiragia (strain ATCC 25017 / CCUG 19701 / FSC 153 / O#319-036).